The chain runs to 41 residues: Ostricacin-2 (41 aa).

3 disulfide bridges follow: C8-C36, C15-C30, and C20-C37.

Its subcellular location is the secreted. Has antibacterial activity against the Gram-positive bacterium S.aureus 1056 MRSA (MIC=1.25 ug/ml) and the Gram-negative bacterium E.coli O157:H7 (MIC=0.96 ug/ml). Has antifungal activity against the yeast C.albicans 3153A (MIC=6.20 ug/ml). The polypeptide is Ostricacin-2 (Struthio camelus (Common ostrich)).